A 124-amino-acid chain; its full sequence is Large ribosomal subunit protein eL22z (124 aa).

Belongs to the eukaryotic ribosomal protein eL22 family.

This chain is Large ribosomal subunit protein eL22z (RPL22B), found in Arabidopsis thaliana (Mouse-ear cress).